Here is a 279-residue protein sequence, read N- to C-terminus: Urease accessory protein UreD (279 aa).

This sequence belongs to the UreD family. UreD, UreF and UreG form a complex that acts as a GTP-hydrolysis-dependent molecular chaperone, activating the urease apoprotein by helping to assemble the nickel containing metallocenter of UreC. The UreE protein probably delivers the nickel.

Its subcellular location is the cytoplasm. In terms of biological role, required for maturation of urease via the functional incorporation of the urease nickel metallocenter. The sequence is that of Urease accessory protein UreD from Nostoc punctiforme (strain ATCC 29133 / PCC 73102).